A 218-amino-acid chain; its full sequence is Hypoxanthine-guanine phosphoribosyltransferase (218 aa).

N-acetylalanine is present on A2. K69 provides a ligand contact to GMP. K103 carries the post-translational modification N6-acetyllysine. K115 participates in a covalent cross-link: Glycyl lysine isopeptide (Lys-Gly) (interchain with G-Cter in SUMO1); alternate. Residue K115 forms a Glycyl lysine isopeptide (Lys-Gly) (interchain with G-Cter in SUMO2); alternate linkage. GMP contacts are provided by residues 134–142, K166, 186–188, and D194; these read EDIIDTGKT and KFV. Catalysis depends on D138, which acts as the Proton acceptor. The residue at position 142 (T142) is a Phosphothreonine. D194 serves as a coordination point for Mg(2+).

Belongs to the purine/pyrimidine phosphoribosyltransferase family. Homotetramer. The cofactor is Mg(2+).

Its subcellular location is the cytoplasm. The enzyme catalyses IMP + diphosphate = hypoxanthine + 5-phospho-alpha-D-ribose 1-diphosphate. The catalysed reaction is GMP + diphosphate = guanine + 5-phospho-alpha-D-ribose 1-diphosphate. Its pathway is purine metabolism; IMP biosynthesis via salvage pathway; IMP from hypoxanthine: step 1/1. In terms of biological role, converts guanine to guanosine monophosphate, and hypoxanthine to inosine monophosphate. Transfers the 5-phosphoribosyl group from 5-phosphoribosylpyrophosphate onto the purine. Plays a central role in the generation of purine nucleotides through the purine salvage pathway. In Canis lupus familiaris (Dog), this protein is Hypoxanthine-guanine phosphoribosyltransferase (HPRT1).